Reading from the N-terminus, the 154-residue chain is Nuclear cap-binding protein subunit 2 (154 aa).

MRNA-binding positions include tyrosine 10, tyrosine 33, 102–106, 113–117, and 123–124; these read RCDWD, RQYGR, and QV. The RRM domain maps to 30–108; sequence STLYMGNLSF…RIIRCDWDAG (79 aa).

It belongs to the RRM NCBP2 family. As to quaternary structure, component of the nuclear cap-binding complex (CBC), a heterodimer composed of Cbp80 and Cbp20 that interacts with m7GpppG-capped RNA.

The protein localises to the nucleus. Component of the cap-binding complex (CBC), which binds co-transcriptionally to the 5' cap of pre-mRNAs and is involved in various processes such as pre-mRNA splicing and RNA-mediated gene silencing (RNAi). The CBC complex is involved in miRNA-mediated RNA interference and is required for primary microRNAs (miRNAs) processing. Also involved in innate immunity via the short interfering RNAs (siRNAs) processing machinery by restricting the viral RNA production. In the CBC complex, Cbp20 recognizes and binds capped RNAs (m7GpppG-capped RNA) but requires Cbp80 to stabilize the movement of its N-terminal loop and lock the CBC into a high affinity cap-binding state with the cap structure. In Bombyx mori (Silk moth), this protein is Nuclear cap-binding protein subunit 2.